The chain runs to 162 residues: MGLETEKADVQLFLDDDSYSHHGDVDFADPEKFADSDHDRDPHRLNSHLKVGFEDVIAEPMTTHSCDKVWICSHALFEISKYVMYKFLTVFLAIPLAFVAGILFATLSCLHIWIIMPFVKTCLMVLPSVQTIWKSVTDVIIAPLCTSVGRSFSSISLQLSHD.

At 1 to 86 (MGLETEKADV…FEISKYVMYK (86 aa)) the chain is on the cytoplasmic side. Residue Tyr-19 is modified to Phosphotyrosine. Phosphoserine is present on residues Ser-20 and Ser-36. An intramembrane region (helical) is located at residues 87 to 107 (FLTVFLAIPLAFVAGILFATL). Over 108 to 162 (SCLHIWIIMPFVKTCLMVLPSVQTIWKSVTDVIIAPLCTSVGRSFSSISLQLSHD) the chain is Cytoplasmic.

It belongs to the caveolin family. As to quaternary structure, homodimer. Caveolin-1 and -2 colocalize and form a stable hetero-oligomeric complex.

It localises to the golgi apparatus membrane. Its subcellular location is the cell membrane. The protein resides in the membrane. The protein localises to the caveola. In terms of biological role, may act as a scaffolding protein within caveolar membranes. Interacts directly with G-protein alpha subunits and can functionally regulate their activity. Caveolin-2 may function as an accessory protein in conjunction with caveolin-1. The chain is Caveolin-2 (CAV2) from Microcebus murinus (Gray mouse lemur).